The sequence spans 1825 residues: MNKLVKRRFQAGLGSEIKRVYKEGQQINTLLLAQVIQVNYKYNTVDLLALQHKEVFQNSYANEGRFSARLPMEFGGRNIVGQPYGQVNPIAVGTVVLVGFINSDKDMPIVISVYNNNDVSKQLSRTQFSNSDPKDLELIGDMHQKFSLYPSLTYDSVDGEGGRVVTFSGKSFIAFDTKEVANSSTTDAGYGTKYEDLETSYYNNGDLIEPMKGRAPNVLFKHQGVLDDDGKPDLHDLLIHINPDGTYRTSMMNKEEDWRTLFEMTPDGRVKLRKQDSINIDGGIEISELGINNEGFVYLRNGDMDLEVRKDGIYSQGKLFTADVDLSDVYDKLNGLSIQIKETNGQLEIIANGVEEQNGKISELSTEITIVAGKVESKVTKTEVQDMIDSSFVDMSDAIKKAQEDADKANKVIADMSSDNRLTPSEKIDLLKEWDIIKNEYPSYLEQAETYEVDSKDYTAKYNSLELFVTPILADMESTSSVDGATLRKTFNSYYTARIALLNSISKKLKDGITEAMKKASQASLDATQAMADASQAKIDADNANKLISDIASDNKLTPSEKYQLKKEWDVIVKEYPTTIAQAEKYAVDTAEYTAKYKALELFVEPLFKDMDETSIVDGERLRATFSDYYASKIALLKEVTDSAKTELDAYGNKISVMETNITQTSEAITLLATRVQTVEDGVQSNKAQIEIQAEQISQKVTASEVKGIVDDSINNLTLGGTNLFVIKTQTAGLLNENDGTVGTAVDNSVVSDYIKVNQKTPYIATLYGNTGTNMIITDWYDKNRTFISGEAVADSGDFSKKYVSPENAVYARVSYKKANSVNIKFEAGTKATDYSPSWEDIKGDQTALEEYIKKVEEQAKKAQQDAENAKNDAENANNAIADMSNDNMLAPNEKKQILLQWEQIKTEYPINLDQATKFGVSSQQYTTAYNALDEYLKPILADMTTTSVVVGSTLRNTFNNYYDKRTTLLNRISDVAKNVADKAQETADTINDNLQNIGGYNYVGFSSGDNMLPRLMIKNVGYYTLGSSTTEFIDSMVAVKGDATTQPFDYTVGTSDKEIAGGGLADYRMKEVKEGQWLTASANVQVIDGGSARLAIYTLEGDNWVGSNSTPIQVSDGLKRVVAQRKVTGLTKGVLIRIESADTNVKEFRFGNVQLEVGIIPTPWKKSDIDIQEDINNVVQNIKTYTAWANDLQGLDFTREKVEGKTYMYVGTSMKDSDNYSDYTWRLTDEHIEGQINGKEGAWIYSPTAPTNPSQGLIWVDLSKVPNQPKRWVDSETGWVALTPEEVKDLPWGEDGTNLADWVAQAEQRISSDSIINTVLGSEDFTSVFDTKANTTDLDNLATYEDLDSIKEDYNRLIKEGINGIDFTPYVTNSELQQLKDSFNFSVQQAGGVNMLKNSLGFSGLDFWDGTVGKNLLPNSTWNLGFGRWGGASIASFEILPPEDDKPTSHILGSIGSRSSTKEIGNRPHPLKVNSGETYTISFDYKEEALAYDKDRPILVVRNYPDKDTDQWMEYSIEGWAVMANGSTTDLTVWRRFTKTFTIGTSGYLDILPKTIVESWTHRSFWRELKIEEGSQATTWVPNKEDGAFTGGIVETTQTEELANLGFGSGFVSSKRPSSSLTQSVELPEIGANLEYSLSFYMKVTTDNPVADFKCGIRVYEGDTLTYTLGIEDATQPIPLGFQQYKLVFTPTSTSTKIEMFVENGQEASVIISGIMYNIGNIPLKWQPYPSEIYNTNVKIDINGVTVKNNQTDGYTMITPQEFSGYSRIDGNIERIFTLNGQVTEVKMLKAEKRITMEPVSVFAMNTVTDTKRIRGWAFVPSFE.

Coiled-coil stretches lie at residues 393-466 (VDMS…NSLE), 681-701 (DGVQ…SQKV), 843-891 (KGDQ…NMLA), and 975-998 (DVAK…LQNI).

Its subcellular location is the virion. Its function is as follows. Structural protein, a component of a tail fiber. This Enterococcus faecalis (Streptococcus faecalis) protein is Tail fiber protein.